Here is a 201-residue protein sequence, read N- to C-terminus: MEADIQLMRLIQEMRAEIHKLEKENQALRMKLTASSQRASGSGRESGDEREEEAPGQSPATLQGAVSTDAAPAVQEHQGNVMIVRRYSISSSVCSSAVNDPWKSGKSHPKSGILEGQRTLKSLACSPIKKQDMEEKVFATDSLTSNRTSQRASPEHVCGCRDKTKAVSFLLPMDMSSYSKNSSSLKHSPNQATNQLSIIAE.

A coiled-coil region spans residues 4–38; the sequence is DIQLMRLIQEMRAEIHKLEKENQALRMKLTASSQR. Disordered regions lie at residues 28–72 and 179–201; these read LRMK…DAAP and SKNS…IIAE. Residues 179–188 are compositionally biased toward low complexity; it reads SKNSSSLKHS. The span at 189–201 shows a compositional bias: polar residues; the sequence is PNQATNQLSIIAE.

This chain is Coiled-coil domain-containing protein 195, found in Homo sapiens (Human).